A 135-amino-acid polypeptide reads, in one-letter code: ATP synthase epsilon chain (135 aa).

The protein belongs to the ATPase epsilon chain family. F-type ATPases have 2 components, CF(1) - the catalytic core - and CF(0) - the membrane proton channel. CF(1) has five subunits: alpha(3), beta(3), gamma(1), delta(1), epsilon(1). CF(0) has three main subunits: a, b and c.

Its subcellular location is the cell inner membrane. Functionally, produces ATP from ADP in the presence of a proton gradient across the membrane. This is ATP synthase epsilon chain from Rhizobium etli (strain CIAT 652).